Reading from the N-terminus, the 96-residue chain is C-C motif chemokine 1 (96 aa).

The signal sequence occupies residues 1–23 (MQIITTALVCLLLAGMWPEDVDS). Cystine bridges form between C33–C57, C34–C73, and C49–C91. N52 carries an N-linked (GlcNAc...) asparagine glycan.

This sequence belongs to the intercrine beta (chemokine CC) family. In terms of assembly, monomer.

It is found in the secreted. Functionally, cytokine that is chemotactic for monocytes but not for neutrophils. Binds to CCR8. This Homo sapiens (Human) protein is C-C motif chemokine 1 (CCL1).